A 221-amino-acid chain; its full sequence is DELTA-actitoxin-Ucs1a (221 aa).

The signal sequence occupies residues 1–19 (MNRLIVLCLFVAMIYATIA). The propeptide occupies 20–42 (LPKKEDISNDERSISVSKVPVKK). The tract at residues 45 to 54 (AIAGAVIEGA) is plays an important role in the hemolytic activity. Residues 53–72 (GAKLTFGILEKILTVLGDIN) are N-terminal region. Phosphocholine-binding residues include Ser96, Val129, Ser147, Pro149, Tyr175, Tyr179, and Tyr180. The interval 147-162 (SVPYDYNLYSNWWNIK) is trp-rich region, which is important for the binding to lipid membrane. The short motif at 186–188 (KGD) is the Cell attachment site, crucial for protein stability element.

Belongs to the actinoporin family. Sea anemone subfamily. In terms of assembly, octamer or nonamer in membranes. Monomer in the soluble state.

The protein resides in the secreted. It localises to the nematocyst. It is found in the target cell membrane. Functionally, pore-forming protein that forms cations-selective hydrophilic pores of around 1 nm and causes cytolysis. Pore formation is a multi-step process that involves specific recognition of membrane sphingomyelin (but neither cholesterol nor phosphatidylcholine) using aromatic rich region and adjacent phosphocholine (POC) binding site, firm binding to the membrane (mainly driven by hydrophobic interactions) accompanied by the transfer of the N-terminal region to the lipid-water interface and finally pore formation after oligomerization of monomers. This is DELTA-actitoxin-Ucs1a from Urticina crassicornis (Mottled anemone).